We begin with the raw amino-acid sequence, 1093 residues long: Error-prone DNA polymerase (1093 aa).

The tract at residues 1–55 (MGWFNGPPSWAEMERVLDSKPRRAGESAAPEPDGPLSRGRATYRPPDEGRAARSS) is disordered. The span at 12 to 25 (EMERVLDSKPRRAG) shows a compositional bias: basic and acidic residues.

The protein belongs to the DNA polymerase type-C family. DnaE2 subfamily.

The protein resides in the cytoplasm. The enzyme catalyses DNA(n) + a 2'-deoxyribonucleoside 5'-triphosphate = DNA(n+1) + diphosphate. In terms of biological role, DNA polymerase involved in damage-induced mutagenesis and translesion synthesis (TLS). It is not the major replicative DNA polymerase. In Mycolicibacterium paratuberculosis (strain ATCC BAA-968 / K-10) (Mycobacterium paratuberculosis), this protein is Error-prone DNA polymerase.